A 515-amino-acid chain; its full sequence is MVSIPEYYEGKNILLTGATGFLGKVLLEKLLRSCPKVNSVYVLVRQKAGQTPQERVEEILSGKLFDRLRDENPDFRQKIIAINSELTQPKLALSEEDKEIIIDSTNVIFHCAATVRFNENLRDAVQLNVIATRQLILLAQQMKNLEVFMHVSTAYAYCNRKHIDEVVYPPPVDPKKLIDSLEWMDDGLVNDITPKLIGDRPNTYIYTKALAEYVVQQEGAKLNVAIVRPSIVGASWKEPFPGWIDNFNGPSGLFIAAGKGILRTMRASNNALADLVPVDVVVNTSLAAAWYSGVNRPRNIMVYNCTTGSTNPFHWGEVGDYLNHSFKTNPLNQVFRHPYVKFYSNNLMLHYWKGVKHTVPALLLDLALRLTGQKPWMMKTITRLHKAMVFLEYFTSNSWVWNTDNVNMLMNQLNPEDKKTFNIDVRQLHWAEYIENYCMGTKKYVLNEEMSGLPAARKHLNKLRNIRYGFNTILVILIWRIFIARSQMARNIWYFVVSLCYKFLSYFRASSTMRY.

Topologically, residues 1 to 465 (MVSIPEYYEG…ARKHLNKLRN (465 aa)) are cytoplasmic. Positions 451–507 (SGLPAARKHLNKLRNIRYGFNTILVILIWRIFIARSQMARNIWYFVVSLCYKFLSYF) are necessary and sufficient for PEX19-mediated localization into peroxisome membrane. Residues 466 to 483 (IRYGFNTILVILIWRIFI) traverse the membrane as a helical segment. Topologically, residues 484–515 (ARSQMARNIWYFVVSLCYKFLSYFRASSTMRY) are peroxisomal.

It belongs to the fatty acyl-CoA reductase family. As to quaternary structure, interacts with PEX19; PEX19 mediates the targeting of FAR1 to peroxisomes.

The protein localises to the peroxisome membrane. The enzyme catalyses a long-chain fatty acyl-CoA + 2 NADPH + 2 H(+) = a long-chain primary fatty alcohol + 2 NADP(+) + CoA. The catalysed reaction is hexadecanoyl-CoA + 2 NADPH + 2 H(+) = hexadecan-1-ol + 2 NADP(+) + CoA. It carries out the reaction octadecanoyl-CoA + 2 NADPH + 2 H(+) = octadecan-1-ol + 2 NADP(+) + CoA. It catalyses the reaction (9Z)-octadecenoyl-CoA + 2 NADPH + 2 H(+) = (9Z)-octadecen-1-ol + 2 NADP(+) + CoA. The enzyme catalyses (9Z,12Z)-octadecadienoyl-CoA + 2 NADPH + 2 H(+) = (9Z,12Z)-octadecadien-1-ol + 2 NADP(+) + CoA. The catalysed reaction is eicosanoyl-CoA + 2 NADPH + 2 H(+) = eicosan-1-ol + 2 NADP(+) + CoA. It carries out the reaction 16-methylheptadecanoyl-CoA + 2 NADPH + 2 H(+) = 16-methylheptadecan-1-ol + 2 NADP(+) + CoA. It catalyses the reaction 18-methylnonadecanoyl-CoA + 2 NADPH + 2 H(+) = 18-methylnonadecan-1-ol + 2 NADP(+) + CoA. In terms of biological role, catalyzes the reduction of saturated and unsaturated C16 or C18 fatty acyl-CoA to fatty alcohols. It plays an essential role in the production of ether lipids/plasmalogens which synthesis requires fatty alcohols. In parallel, it is also required for wax monoesters production since fatty alcohols also constitute a substrate for their synthesis. Its function is as follows. Catalyzes the reduction of saturated and unsaturated C16 or C18 fatty acyl-CoA to fatty alcohols. It plays an essential role in the production of ether lipids/plasmalogens which synthesis requires fatty alcohols. In parallel, it is also required for wax monoesters production since fatty alcohols also constitute a substrate for their synthesis. The polypeptide is Fatty acyl-CoA reductase 1 (Rattus norvegicus (Rat)).